Here is a 574-residue protein sequence, read N- to C-terminus: Arginine--tRNA ligase (574 aa).

The 'HIGH' region motif lies at 121–131; it reads PNIAKEMHIGH.

This sequence belongs to the class-I aminoacyl-tRNA synthetase family. In terms of assembly, monomer.

It is found in the cytoplasm. The catalysed reaction is tRNA(Arg) + L-arginine + ATP = L-arginyl-tRNA(Arg) + AMP + diphosphate. The polypeptide is Arginine--tRNA ligase (Buchnera aphidicola subsp. Acyrthosiphon pisum (strain Tuc7)).